The sequence spans 238 residues: Small ribosomal subunit protein uS2 (238 aa).

This sequence belongs to the universal ribosomal protein uS2 family.

In Synechococcus sp. (strain CC9605), this protein is Small ribosomal subunit protein uS2.